Reading from the N-terminus, the 348-residue chain is Lipooligosaccharide heptosyltransferase 2 (348 aa).

It belongs to the glycosyltransferase 9 family.

The catalysed reaction is an L-alpha-D-Hep-(1-&gt;5)-[alpha-Kdo-(2-&gt;4)]-alpha-Kdo-(2-&gt;6)-lipid A + ADP-L-glycero-beta-D-manno-heptose = an L-alpha-D-Hep-(1-&gt;3)-L-alpha-D-Hep-(1-&gt;5)-[alpha-Kdo-(2-&gt;4)]-alpha-Kdo-(2-&gt;6)-lipid A + ADP + H(+). Its pathway is bacterial outer membrane biogenesis; LOS core biosynthesis. In terms of biological role, glycosyltransferase involved in the biosynthesis of the core oligosaccharide region of lipooligosaccharide (LOS). Catalyzes the addition of a heptose unit to the heptosyl-Kdo2-lipid A module. In Haemophilus ducreyi (strain 35000HP / ATCC 700724), this protein is Lipooligosaccharide heptosyltransferase 2.